Reading from the N-terminus, the 517-residue chain is Cell division cycle protein 73 (517 aa).

A compositionally biased stretch (basic and acidic residues) spans 124 to 135 (SEPEAKKPRLDG). Disordered stretches follow at residues 124–159 (SEPE…SAAK) and 306–326 (GHHA…LAKP). Positions 315-324 (DAPPGRPPLA) are enriched in pro residues.

Belongs to the CDC73 family. In terms of assembly, component of the PAF1 complex which consists of at least cdc-73, ctr-9, leo-1, pafo-1 and rtfo-1.

The protein localises to the nucleus. Functionally, component of the PAF1 complex which is a multifunctional complex involved in transcription initiation via genetic interactions with TATA-binding proteins, elongation and transcription-coupled histone modification. The sequence is that of Cell division cycle protein 73 from Caenorhabditis elegans.